The chain runs to 154 residues: Lipoprotein signal peptidase (154 aa).

A run of 2 helical transmembrane segments spans residues 55-75 and 84-104; these read GHMW…IYIM and LFSI…IDRV. Residues D111 and D129 contribute to the active site. The helical transmembrane segment at 124–144 threads the bilayer; that stretch reads IFNVADASLSVGVVLMLVYVF.

It belongs to the peptidase A8 family.

The protein localises to the cell membrane. The catalysed reaction is Release of signal peptides from bacterial membrane prolipoproteins. Hydrolyzes -Xaa-Yaa-Zaa-|-(S,diacylglyceryl)Cys-, in which Xaa is hydrophobic (preferably Leu), and Yaa (Ala or Ser) and Zaa (Gly or Ala) have small, neutral side chains.. It functions in the pathway protein modification; lipoprotein biosynthesis (signal peptide cleavage). This protein specifically catalyzes the removal of signal peptides from prolipoproteins. The sequence is that of Lipoprotein signal peptidase from Listeria monocytogenes serovar 1/2a (strain ATCC BAA-679 / EGD-e).